We begin with the raw amino-acid sequence, 602 residues long: Glutamine--fructose-6-phosphate aminotransferase [isomerizing] (602 aa).

Cys-2 serves as the catalytic Nucleophile; for GATase activity. In terms of domain architecture, Glutamine amidotransferase type-2 spans 2–222 (CGIFGIIFAE…DGEYGYITAG (221 aa)). 2 consecutive SIS domains span residues 284-422 (VANA…ALGH) and 452-592 (LAKR…PDKP). Lys-597 (for Fru-6P isomerization activity) is an active-site residue.

In terms of assembly, homodimer.

It is found in the cytoplasm. It catalyses the reaction D-fructose 6-phosphate + L-glutamine = D-glucosamine 6-phosphate + L-glutamate. Its function is as follows. Catalyzes the first step in hexosamine metabolism, converting fructose-6P into glucosamine-6P using glutamine as a nitrogen source. The protein is Glutamine--fructose-6-phosphate aminotransferase [isomerizing] of Pyrobaculum aerophilum (strain ATCC 51768 / DSM 7523 / JCM 9630 / CIP 104966 / NBRC 100827 / IM2).